Reading from the N-terminus, the 794-residue chain is DNA ligase (794 aa).

Residues 35–39 (DAEYD), 84–85 (SL), and Glu126 each bind NAD(+). The N6-AMP-lysine intermediate role is filled by Lys128. Positions 149, 186, 302, and 326 each coordinate NAD(+). Zn(2+) contacts are provided by Cys420, Cys423, Cys450, and Cys456. Positions 711-794 (VEGLPLAGQT…KLFDEHGVAR (84 aa)) constitute a BRCT domain.

It belongs to the NAD-dependent DNA ligase family. LigA subfamily. The cofactor is Mg(2+). Mn(2+) serves as cofactor.

The catalysed reaction is NAD(+) + (deoxyribonucleotide)n-3'-hydroxyl + 5'-phospho-(deoxyribonucleotide)m = (deoxyribonucleotide)n+m + AMP + beta-nicotinamide D-nucleotide.. Functionally, DNA ligase that catalyzes the formation of phosphodiester linkages between 5'-phosphoryl and 3'-hydroxyl groups in double-stranded DNA using NAD as a coenzyme and as the energy source for the reaction. It is essential for DNA replication and repair of damaged DNA. This Pseudomonas aeruginosa (strain LESB58) protein is DNA ligase.